A 39-amino-acid chain; its full sequence is Photosystem I reaction center subunit IX (39 aa).

A helical transmembrane segment spans residues 4–24 (FLTTAPVVAAIWFTLTAGILI).

It belongs to the PsaJ family.

The protein resides in the cellular thylakoid membrane. In terms of biological role, may help in the organization of the PsaE and PsaF subunits. The chain is Photosystem I reaction center subunit IX from Synechococcus sp. (strain CC9311).